A 257-amino-acid polypeptide reads, in one-letter code: uncharacterized protein (257 aa).

Residues 6–26 (IFWLNLAAIIIISIVVSGDMF) form a helical membrane-spanning segment.

Belongs to the staphylococcal tandem lipoprotein family.

Its subcellular location is the cell membrane. This is an uncharacterized protein from Staphylococcus aureus (strain NCTC 8325 / PS 47).